Reading from the N-terminus, the 175-residue chain is ATP synthase subunit b (175 aa).

A helical membrane pass occupies residues 19–39 (LVVGTIAFALLVFVLLKFVMP).

The protein belongs to the ATPase B chain family. In terms of assembly, F-type ATPases have 2 components, F(1) - the catalytic core - and F(0) - the membrane proton channel. F(1) has five subunits: alpha(3), beta(3), gamma(1), delta(1), epsilon(1). F(0) has three main subunits: a(1), b(2) and c(10-14). The alpha and beta chains form an alternating ring which encloses part of the gamma chain. F(1) is attached to F(0) by a central stalk formed by the gamma and epsilon chains, while a peripheral stalk is formed by the delta and b chains.

It is found in the cell membrane. F(1)F(0) ATP synthase produces ATP from ADP in the presence of a proton or sodium gradient. F-type ATPases consist of two structural domains, F(1) containing the extramembraneous catalytic core and F(0) containing the membrane proton channel, linked together by a central stalk and a peripheral stalk. During catalysis, ATP synthesis in the catalytic domain of F(1) is coupled via a rotary mechanism of the central stalk subunits to proton translocation. Functionally, component of the F(0) channel, it forms part of the peripheral stalk, linking F(1) to F(0). The chain is ATP synthase subunit b from Salinispora tropica (strain ATCC BAA-916 / DSM 44818 / JCM 13857 / NBRC 105044 / CNB-440).